The primary structure comprises 334 residues: tRNA uridine(34) hydroxylase (334 aa).

The 95-residue stretch at 123–217 (SDPDVILVDT…YLEEVKQEES (95 aa)) folds into the Rhodanese domain. The Cysteine persulfide intermediate role is filled by C177.

This sequence belongs to the TrhO family.

It carries out the reaction uridine(34) in tRNA + AH2 + O2 = 5-hydroxyuridine(34) in tRNA + A + H2O. Its function is as follows. Catalyzes oxygen-dependent 5-hydroxyuridine (ho5U) modification at position 34 in tRNAs. This chain is tRNA uridine(34) hydroxylase, found in Shewanella putrefaciens (strain CN-32 / ATCC BAA-453).